A 194-amino-acid polypeptide reads, in one-letter code: Probable GTP-binding protein EngB (194 aa).

The EngB-type G domain maps to 19-193; it reads DCIQICFWGR…VLFIEENIFK (175 aa). GTP-binding positions include 27–34, 53–57, 70–73, 137–140, and 172–174; these read GRSNVGKS, GRTQF, DLPG, TKID, and VSS. 2 residues coordinate Mg(2+): S34 and T55.

Belongs to the TRAFAC class TrmE-Era-EngA-EngB-Septin-like GTPase superfamily. EngB GTPase family. Mg(2+) serves as cofactor.

Functionally, necessary for normal cell division and for the maintenance of normal septation. This chain is Probable GTP-binding protein EngB, found in Mycoplasmopsis agalactiae (strain NCTC 10123 / CIP 59.7 / PG2) (Mycoplasma agalactiae).